Reading from the N-terminus, the 619-residue chain is 4-hydroxyphenylalkanoate adenylyltransferase (619 aa).

The protein belongs to the ATP-dependent AMP-binding enzyme family.

The catalysed reaction is 17-(4-hydroxyphenyl)heptadecanoate + holo-[(phenol)carboxyphthiodiolenone synthase] + ATP = 17-(4-hydroxyphenyl)heptadecanoyl-[(phenol)carboxyphthiodiolenone synthase] + AMP + diphosphate. The enzyme catalyses 19-(4-hydroxyphenyl)nonadecanoate + holo-[(phenol)carboxyphthiodiolenone synthase] + ATP = 19-(4-hydroxyphenyl)nonadecanoyl-[(phenol)carboxyphthiodiolenone synthase] + AMP + diphosphate. It functions in the pathway lipid metabolism; fatty acid biosynthesis. Catalyzes the activation of long-chain fatty acids as acyl-adenylates (acyl-AMP), which are then transferred to the multifunctional polyketide synthase PpsA for further chain extension. Involved in the biosynthesis of phenolphthiocerol, which is an important intermediate in the biosynthesis of phenolic glycolipid (PGL), also called mycosid B. The chain is 4-hydroxyphenylalkanoate adenylyltransferase (fadD29) from Mycobacterium bovis (strain ATCC BAA-935 / AF2122/97).